The following is a 345-amino-acid chain: Calcium/calmodulin-dependent protein kinase type 1 (345 aa).

The interval 1-23 is disordered; sequence MPLFGSKKETAKKSSKKDKDEGK. Residues 31-287 enclose the Protein kinase domain; that stretch reads YILKDLLGTG…CKQALGHPWI (257 aa). ATP is bound by residues 37–45 and Lys61; that span reads LGTGAFSQV. The active-site Proton acceptor is the Asp153. The autoinhibitory domain stretch occupies residues 287-327; sequence ISGNAASTENIHSSVSEQLKKNFAKSRWRQAYHATAVIRQM. Residues 307 to 328 form a calmodulin-binding region; the sequence is KNFAKSRWRQAYHATAVIRQMR.

This sequence belongs to the protein kinase superfamily. CAMK Ser/Thr protein kinase family. CaMK subfamily. Highly expressed in hepatopancreas and to a lesser extent in gills. Low expression in hemocytes, testis, ovary, heart, eyestalk, muscle and epidermis.

The catalysed reaction is L-seryl-[protein] + ATP = O-phospho-L-seryl-[protein] + ADP + H(+). The enzyme catalyses L-threonyl-[protein] + ATP = O-phospho-L-threonyl-[protein] + ADP + H(+). Its activity is regulated as follows. Activated by Ca(2+)/calmodulin. Binding of calmodulin results in conformational change that relieves intrasteric autoinhibition. Its function is as follows. Calcium/calmodulin-dependent protein kinase that operates in the calcium-triggered CaMKK-CaMK1 signaling cascade and, upon calcium influx, regulates transcription activators activity, cell cycle, hormone production, cell differentiation, actin filament organization and neurite outgrowth. Involved in molting. In Macrobrachium nipponense (Oriental river shrimp), this protein is Calcium/calmodulin-dependent protein kinase type 1.